The sequence spans 185 residues: Ribosome-recycling factor (185 aa).

This sequence belongs to the RRF family.

The protein localises to the cytoplasm. Functionally, responsible for the release of ribosomes from messenger RNA at the termination of protein biosynthesis. May increase the efficiency of translation by recycling ribosomes from one round of translation to another. This chain is Ribosome-recycling factor, found in Bacillus cereus (strain G9842).